Here is a 480-residue protein sequence, read N- to C-terminus: tRNA-2-methylthio-N(6)-dimethylallyladenosine synthase (480 aa).

Positions 25–145 (GVFYVHTLGC…LPQLLDQARI (121 aa)) constitute an MTTase N-terminal domain. [4Fe-4S] cluster is bound by residues C34, C74, C108, C182, C186, and C189. Positions 168–397 (RASKVSSWVA…VALQERITEE (230 aa)) constitute a Radical SAM core domain. The TRAM domain maps to 400–470 (KTFEGRDVEV…RHNLIADPNP (71 aa)).

Belongs to the methylthiotransferase family. MiaB subfamily. As to quaternary structure, monomer. [4Fe-4S] cluster is required as a cofactor.

Its subcellular location is the cytoplasm. The enzyme catalyses N(6)-dimethylallyladenosine(37) in tRNA + (sulfur carrier)-SH + AH2 + 2 S-adenosyl-L-methionine = 2-methylsulfanyl-N(6)-dimethylallyladenosine(37) in tRNA + (sulfur carrier)-H + 5'-deoxyadenosine + L-methionine + A + S-adenosyl-L-homocysteine + 2 H(+). In terms of biological role, catalyzes the methylthiolation of N6-(dimethylallyl)adenosine (i(6)A), leading to the formation of 2-methylthio-N6-(dimethylallyl)adenosine (ms(2)i(6)A) at position 37 in tRNAs that read codons beginning with uridine. The protein is tRNA-2-methylthio-N(6)-dimethylallyladenosine synthase of Bifidobacterium adolescentis (strain ATCC 15703 / DSM 20083 / NCTC 11814 / E194a).